Here is a 171-residue protein sequence, read N- to C-terminus: MKIWKDIFTGDEMFSDTYKVKLIDNVMYEVYGKHVSRTLGDVQLDGANPSAEEADEGTDAATESGVDIVLNHRLVETGFADKKQFTTYLKDYMKKLVTRLEENNPSEVEVFKTNINKVMKDLLGRFKDLQFFTGESMDCEGLIAMLEYRDIDGESTPILLCFKHGLEEEKF.

The TCTP domain maps to 1 to 171 (MKIWKDIFTG…FKHGLEEEKF (171 aa)).

Belongs to the TCTP family.

The protein localises to the cytoplasm. In terms of biological role, involved in calcium binding and microtubule stabilization. The sequence is that of Translationally-controlled tumor protein homolog (Tctp) from Aedes albopictus (Asian tiger mosquito).